Here is a 256-residue protein sequence, read N- to C-terminus: Thiazole synthase (256 aa).

The active-site Schiff-base intermediate with DXP is the Lys-95. 1-deoxy-D-xylulose 5-phosphate contacts are provided by residues Gly-156, 182–183 (AG), and 204–205 (NT).

It belongs to the ThiG family. Homotetramer. Forms heterodimers with either ThiH or ThiS.

Its subcellular location is the cytoplasm. The catalysed reaction is [ThiS sulfur-carrier protein]-C-terminal-Gly-aminoethanethioate + 2-iminoacetate + 1-deoxy-D-xylulose 5-phosphate = [ThiS sulfur-carrier protein]-C-terminal Gly-Gly + 2-[(2R,5Z)-2-carboxy-4-methylthiazol-5(2H)-ylidene]ethyl phosphate + 2 H2O + H(+). It participates in cofactor biosynthesis; thiamine diphosphate biosynthesis. In terms of biological role, catalyzes the rearrangement of 1-deoxy-D-xylulose 5-phosphate (DXP) to produce the thiazole phosphate moiety of thiamine. Sulfur is provided by the thiocarboxylate moiety of the carrier protein ThiS. In vitro, sulfur can be provided by H(2)S. The polypeptide is Thiazole synthase (Shigella dysenteriae serotype 1 (strain Sd197)).